Here is a 204-residue protein sequence, read N- to C-terminus: Large ribosomal subunit protein eL15 (204 aa).

The segment covering 172-182 (RGLRGRGHLHN) has biased composition (basic residues). Positions 172-204 (RGLRGRGHLHNKAPPSRRANWKRNQTLSLPRYR) are disordered. The segment covering 193–204 (KRNQTLSLPRYR) has biased composition (polar residues).

This sequence belongs to the eukaryotic ribosomal protein eL15 family.

The polypeptide is Large ribosomal subunit protein eL15 (RPL15) (Petunia hybrida (Petunia)).